A 643-amino-acid chain; its full sequence is Threonine--tRNA ligase (643 aa).

Residues 1 to 61 (MPIITLPDGS…SEDSSLEIIT (61 aa)) enclose the TGS domain. The interval 243-534 (DHRRIGKALD…ITEEYAGFFP (292 aa)) is catalytic. Zn(2+)-binding residues include cysteine 334, histidine 385, and histidine 511.

Belongs to the class-II aminoacyl-tRNA synthetase family. In terms of assembly, homodimer. Requires Zn(2+) as cofactor.

The protein resides in the cytoplasm. The enzyme catalyses tRNA(Thr) + L-threonine + ATP = L-threonyl-tRNA(Thr) + AMP + diphosphate + H(+). In terms of biological role, catalyzes the attachment of threonine to tRNA(Thr) in a two-step reaction: L-threonine is first activated by ATP to form Thr-AMP and then transferred to the acceptor end of tRNA(Thr). Also edits incorrectly charged L-seryl-tRNA(Thr). In Actinobacillus pleuropneumoniae serotype 5b (strain L20), this protein is Threonine--tRNA ligase.